We begin with the raw amino-acid sequence, 54 residues long: UPF0391 membrane protein Sde_0270 (54 aa).

Helical transmembrane passes span 6-26 (IVFL…IAGV) and 29-49 (GIAK…LVIG).

Belongs to the UPF0391 family.

The protein resides in the cell membrane. This Saccharophagus degradans (strain 2-40 / ATCC 43961 / DSM 17024) protein is UPF0391 membrane protein Sde_0270.